Here is an 859-residue protein sequence, read N- to C-terminus: Envelope glycoprotein gp160 (859 aa).

The first 24 residues, 1–24 (MERGRNQLLIAILLASACLIYCRQ), serve as a signal peptide directing secretion. The Extracellular segment spans residues 25–680 (QYVTVFYGVP…LTSWISYIQY (656 aa)). The N-linked (GlcNAc...) asparagine; by host glycan is linked to Asn38. Cys45 and Cys58 are disulfide-bonded. 22 N-linked (GlcNAc...) asparagine; by host glycosylation sites follow: Asn71, Asn115, Asn148, Asn163, Asn176, Asn188, Asn195, Asn205, Asn237, Asn247, Asn271, Asn277, Asn288, Asn299, Asn309, Asn343, Asn366, Asn398, Asn411, Asn448, Asn463, and Asn467. 5 disulfide bridges follow: Cys102–Cys213, Cys109–Cys204, Cys114–Cys160, Cys226–Cys256, and Cys236–Cys248. The interval 114 to 159 (CNISTSDTTMIRTTTPSTAKEAPISDNSPCIRTNNCSGLEEEKIVK) is V1. The V2 stretch occupies residues 160-204 (CHFNMTGLERDKKKQYNETWYSSDVVCDNSTDQTTNETTCYMNHC). Residues 304–337 (CRRPGNKTVVPITLMSGQRFHSRPIINKRPRQAW) are V3. The cysteines at positions 304 and 338 are disulfide-linked. Cystine bridges form between Cys390–Cys447 and Cys397–Cys420. The V4 stretch occupies residues 397–420 (CNMTWFLNWVENKPNTTKRNYAPC). Positions 463–470 (NQTTNITF) are V5. The segment at 513-533 (GAFVLGFLGFLTTAGVAMGTA) is fusion peptide. Positions 576–592 (LQARVTAIEKYLKDQAQ) are immunosuppression. 3 N-linked (GlcNAc...) asparagine; by host glycosylation sites follow: Asn612, Asn621, and Asn637. The stretch at 625 to 646 (QEWEQKVRYLEANISQSLEEAQ) forms a coiled coil. The tract at residues 658 to 679 (KLNNWDVFTNWFDLTSWISYIQ) is MPER; binding to GalCer. Residues 681–701 (GVYIVVGIIVLRIVIYVVQML) form a helical membrane-spanning segment. The Cytoplasmic portion of the chain corresponds to 702–859 (SRLRKGYRPV…IRQGAELALL (158 aa)). The YXXV motif; contains endocytosis signal motif lies at 708–711 (YRPV). Positions 726–745 (KDPEQPASEETEEDVGGNGG) are disordered. Residue Cys774 is the site of S-palmitoyl cysteine; by host attachment. A Di-leucine internalization motif motif is present at residues 858 to 859 (LL).

As to quaternary structure, the mature envelope protein (Env) consists of a homotrimer of non-covalently associated gp120-gp41 heterodimers. The resulting complex protrudes from the virus surface as a spike. There seems to be as few as 10 spikes on the average virion. Interacts with human CD4, CCR5 and CXCR4, to form a P4HB/PDI-CD4-CXCR4-gp120 complex. Gp120 also interacts with the C-type lectins CD209/DC-SIGN and CLEC4M/DC-SIGNR (collectively referred to as DC-SIGN(R)). Gp120 and gp41 interact with GalCer. In terms of assembly, the mature envelope protein (Env) consists of a homotrimer of non-covalently associated gp120-gp41 heterodimers. The resulting complex protrudes from the virus surface as a spike. There seems to be as few as 10 spikes on the average virion. Specific enzymatic cleavages in vivo yield mature proteins. Envelope glycoproteins are synthesized as an inactive precursor that is heavily N-glycosylated and processed likely by host cell furin in the Golgi to yield the mature SU and TM proteins. The cleavage site between SU and TM requires the minimal sequence [KR]-X-[KR]-R. Post-translationally, palmitoylation of the transmembrane protein and of Env polyprotein (prior to its proteolytic cleavage) is essential for their association with host cell membrane lipid rafts. Palmitoylation is therefore required for envelope trafficking to classical lipid rafts, but not for viral replication.

The protein resides in the virion membrane. The protein localises to the host cell membrane. Its subcellular location is the host endosome membrane. Its function is as follows. The surface protein gp120 (SU) attaches the virus to the host lymphoid cell by binding to the primary receptor CD4. This interaction induces a structural rearrangement creating a high affinity binding site for a chemokine coreceptor like CXCR4 and/or CCR5. This peculiar 2 stage receptor-interaction strategy allows gp120 to maintain the highly conserved coreceptor-binding site in a cryptic conformation, protected from neutralizing antibodies. Since CD4 also displays a binding site for the disulfide-isomerase P4HB/PDI, a P4HB/PDI-CD4-CXCR4-gp120 complex may form. In that complex, P4HB/PDI could reach and reduce gp120 disulfide bonds, causing major conformational changes in gp120. TXN, another PDI family member could also be involved in disulfide rearrangements in Env during fusion. These changes are transmitted to the transmembrane protein gp41 and are thought to activate its fusogenic potential by unmasking its fusion peptide. Functionally, the surface protein gp120 is a ligand for CD209/DC-SIGN and CLEC4M/DC-SIGNR, which are respectively found on dendritic cells (DCs), and on endothelial cells of liver sinusoids and lymph node sinuses. These interactions allow capture of viral particles at mucosal surfaces by these cells and subsequent transmission to permissive cells. DCs are professional antigen presenting cells, critical for host immunity by inducing specific immune responses against a broad variety of pathogens. They act as sentinels in various tissues where they take up antigen, process it, and present it to T-cells following migration to lymphoid organs. HIV subverts the migration properties of dendritic cells to gain access to CD4+ T-cells in lymph nodes. Virus transmission to permissive T-cells occurs either in trans (without DCs infection, through viral capture and transmission), or in cis (following DCs productive infection, through the usual CD4-gp120 interaction), thereby inducing a robust infection. In trans infection, bound virions remain infectious over days and it is proposed that they are not degraded, but protected in non-lysosomal acidic organelles within the DCs close to the cell membrane thus contributing to the viral infectious potential during DCs' migration from the periphery to the lymphoid tissues. On arrival at lymphoid tissues, intact virions recycle back to DCs' cell surface allowing virus transmission to CD4+ T-cells. Virion capture also seems to lead to MHC-II-restricted viral antigen presentation, and probably to the activation of HIV-specific CD4+ cells. In terms of biological role, the transmembrane protein gp41 (TM) acts as a class I viral fusion protein. Under the current model, the protein has at least 3 conformational states: pre-fusion native state, pre-hairpin intermediate state, and post-fusion hairpin state. During fusion of viral and target intracellular membranes, the coiled coil regions (heptad repeats) assume a trimer-of-hairpins structure, positioning the fusion peptide in close proximity to the C-terminal region of the ectodomain. The formation of this structure appears to drive apposition and subsequent fusion of viral and target cell membranes. Complete fusion occurs in host cell endosomes and is dynamin-dependent, however some lipid transfer might occur at the plasma membrane. The virus undergoes clathrin-dependent internalization long before endosomal fusion, thus minimizing the surface exposure of conserved viral epitopes during fusion and reducing the efficacy of inhibitors targeting these epitopes. Membranes fusion leads to delivery of the nucleocapsid into the cytoplasm. The envelope glycoprotein gp160 precursor down-modulates cell surface CD4 antigen by interacting with it in the endoplasmic reticulum and blocking its transport to the cell surface. Its function is as follows. The gp120-gp41 heterodimer seems to contribute to T-cell depletion during HIV-1 infection. The envelope glycoproteins expressed on the surface of infected cells induce apoptosis through an interaction with uninfected cells expressing the receptor (CD4) and the coreceptors CXCR4 or CCR5. This type of bystander killing may be obtained by at least three distinct mechanisms. First, the interaction between the 2 cells can induce cellular fusion followed by nuclear fusion within the syncytium. Syncytia are condemned to die from apoptosis. Second, the 2 interacting cells may not fuse entirely and simply exchange plasma membrane lipids, after a sort of hemifusion process, followed by rapid death. Third, it is possible that virus-infected cells, on the point of undergoing apoptosis, fuse with CD4-expressing cells, in which case apoptosis is rapidly transmitted from one cell to the other and thus occurs in a sort of contagious fashion. Functionally, the gp120-gp41 heterodimer allows rapid transcytosis of the virus through CD4 negative cells such as simple epithelial monolayers of the intestinal, rectal and endocervical epithelial barriers. Both gp120 and gp41 specifically recognize glycosphingolipids galactosyl-ceramide (GalCer) or 3' sulfo-galactosyl-ceramide (GalS) present in the lipid rafts structures of epithelial cells. Binding to these alternative receptors allows the rapid transcytosis of the virus through the epithelial cells. This transcytotic vesicle-mediated transport of virions from the apical side to the basolateral side of the epithelial cells does not involve infection of the cells themselves. This is Envelope glycoprotein gp160 (env) from Human immunodeficiency virus type 2 subtype A (isolate CAM2) (HIV-2).